Reading from the N-terminus, the 271-residue chain is MLLAPPSTPSRGRTPSAVERLEADKAKYVKTHQVIARRQEPALRGSPGPLTPHPCNELGPPASPRTPRPVRRGSGRRLPRPDSLIFYRQKRDCKASVNKENAKGQGLVRRLFLGAPRDAAPSSPASTERPAASGGWAAPQDAPEAAGKRALCPTCSLPLSEKERFFNYCGLERALVEVLGAERFSPQSWGADASPQAGTSPPPGSGDASDWTSSDRGVDSPGGAGGGGGSEAAGSARDRRPPVSVVERNARVIQWLYGCQRARGPPRESEV.

Disordered stretches follow at residues 1–83 (MLLA…RPDS), 116–145 (PRDAAPSSPASTERPAASGGWAAPQDAPEA), and 186–245 (PQSW…PVSV). Residues 68–78 (RPVRRGSGRRL) are compositionally biased toward basic residues. Low complexity predominate over residues 116 to 126 (PRDAAPSSPAS). Positions 220–231 (SPGGAGGGGGSE) are enriched in gly residues.

It belongs to the FAM110 family.

The sequence is that of Protein FAM110D (FAM110D) from Homo sapiens (Human).